A 482-amino-acid polypeptide reads, in one-letter code: Methylenetetrahydrofolate--tRNA-(uracil-5-)-methyltransferase TrmFO (482 aa).

Position 11 to 16 (11 to 16 (GGGLAG)) interacts with FAD. Residues 450–482 (LRQPSPWSAEDSPRAALPIPEPTPLGPASGSSE) form a disordered region.

It belongs to the MnmG family. TrmFO subfamily. The cofactor is FAD.

It localises to the cytoplasm. The catalysed reaction is uridine(54) in tRNA + (6R)-5,10-methylene-5,6,7,8-tetrahydrofolate + NADH + H(+) = 5-methyluridine(54) in tRNA + (6S)-5,6,7,8-tetrahydrofolate + NAD(+). It carries out the reaction uridine(54) in tRNA + (6R)-5,10-methylene-5,6,7,8-tetrahydrofolate + NADPH + H(+) = 5-methyluridine(54) in tRNA + (6S)-5,6,7,8-tetrahydrofolate + NADP(+). Catalyzes the folate-dependent formation of 5-methyl-uridine at position 54 (M-5-U54) in all tRNAs. The sequence is that of Methylenetetrahydrofolate--tRNA-(uracil-5-)-methyltransferase TrmFO from Rhodospirillum rubrum (strain ATCC 11170 / ATH 1.1.1 / DSM 467 / LMG 4362 / NCIMB 8255 / S1).